A 116-amino-acid polypeptide reads, in one-letter code: Large ribosomal subunit protein bL19 (116 aa).

Belongs to the bacterial ribosomal protein bL19 family.

In terms of biological role, this protein is located at the 30S-50S ribosomal subunit interface and may play a role in the structure and function of the aminoacyl-tRNA binding site. This is Large ribosomal subunit protein bL19 from Nocardioides sp. (strain ATCC BAA-499 / JS614).